A 566-amino-acid polypeptide reads, in one-letter code: Proline--tRNA ligase (566 aa).

Belongs to the class-II aminoacyl-tRNA synthetase family. ProS type 1 subfamily. In terms of assembly, homodimer.

Its subcellular location is the cytoplasm. It carries out the reaction tRNA(Pro) + L-proline + ATP = L-prolyl-tRNA(Pro) + AMP + diphosphate. Its function is as follows. Catalyzes the attachment of proline to tRNA(Pro) in a two-step reaction: proline is first activated by ATP to form Pro-AMP and then transferred to the acceptor end of tRNA(Pro). As ProRS can inadvertently accommodate and process non-cognate amino acids such as alanine and cysteine, to avoid such errors it has two additional distinct editing activities against alanine. One activity is designated as 'pretransfer' editing and involves the tRNA(Pro)-independent hydrolysis of activated Ala-AMP. The other activity is designated 'posttransfer' editing and involves deacylation of mischarged Ala-tRNA(Pro). The misacylated Cys-tRNA(Pro) is not edited by ProRS. The sequence is that of Proline--tRNA ligase from Bacillus cereus (strain AH187).